The sequence spans 239 residues: Large ribosomal subunit protein uL3 (239 aa).

2 disordered regions span residues 140 to 164 and 211 to 239; these read SHRS…KMPG and PLPK…QEGA. Q151 bears the N5-methylglutamine mark.

This sequence belongs to the universal ribosomal protein uL3 family. As to quaternary structure, part of the 50S ribosomal subunit. Forms a cluster with proteins L14 and L19. Post-translationally, methylated by PrmB.

In terms of biological role, one of the primary rRNA binding proteins, it binds directly near the 3'-end of the 23S rRNA, where it nucleates assembly of the 50S subunit. In Bradyrhizobium sp. (strain ORS 278), this protein is Large ribosomal subunit protein uL3.